The chain runs to 207 residues: MPKVALYNQNGSTAGDIELNASVFGIEPNESVVFDAILMQRASLRQGSHKVKNRSEVRGGGRKPWRQKGTGRARQGSIRSPQWRGGGVVFGPTPRSYSYKLPKKVRRLAIKSVLSSKVNDNNIIVLEDLTLDTVKTKEMAAILKGLSVEKKALIVTADANEAVSLSARNIPGVTVVQANGINVLDVVNHEKLLITKAAVEKVEEVLA.

The interval 48 to 89 is disordered; sequence SHKVKNRSEVRGGGRKPWRQKGTGRARQGSIRSPQWRGGGVV. Residues 60-71 show a composition bias toward basic residues; that stretch reads GGRKPWRQKGTG.

This sequence belongs to the universal ribosomal protein uL4 family. Part of the 50S ribosomal subunit.

Functionally, one of the primary rRNA binding proteins, this protein initially binds near the 5'-end of the 23S rRNA. It is important during the early stages of 50S assembly. It makes multiple contacts with different domains of the 23S rRNA in the assembled 50S subunit and ribosome. Its function is as follows. Forms part of the polypeptide exit tunnel. In Bacillus velezensis (strain DSM 23117 / BGSC 10A6 / LMG 26770 / FZB42) (Bacillus amyloliquefaciens subsp. plantarum), this protein is Large ribosomal subunit protein uL4.